A 381-amino-acid polypeptide reads, in one-letter code: tRNA-specific 2-thiouridylase MnmA (381 aa).

ATP contacts are provided by residues Gly9–Ser16 and Met35. Residues Asn95–Asp97 form an interaction with target base in tRNA region. Catalysis depends on Cys100, which acts as the Nucleophile. Cysteines 100 and 196 form a disulfide. An ATP-binding site is contributed by Gly124. The interaction with tRNA stretch occupies residues Lys146 to Gln148. Cys196 (cysteine persulfide intermediate) is an active-site residue. Residues Arg308–Tyr309 are interaction with tRNA.

It belongs to the MnmA/TRMU family.

Its subcellular location is the cytoplasm. It catalyses the reaction S-sulfanyl-L-cysteinyl-[protein] + uridine(34) in tRNA + AH2 + ATP = 2-thiouridine(34) in tRNA + L-cysteinyl-[protein] + A + AMP + diphosphate + H(+). In terms of biological role, catalyzes the 2-thiolation of uridine at the wobble position (U34) of tRNA, leading to the formation of s(2)U34. This is tRNA-specific 2-thiouridylase MnmA from Burkholderia multivorans (strain ATCC 17616 / 249).